The primary structure comprises 157 residues: Ribonuclease H (157 aa).

The RNase H type-1 domain occupies 3-144 (ELKQLYIFTD…CDVLARKAAE (142 aa)). Mg(2+)-binding residues include Asp-12, Glu-50, Asp-72, and Asp-136.

It belongs to the RNase H family. As to quaternary structure, monomer. It depends on Mg(2+) as a cofactor.

Its subcellular location is the cytoplasm. It carries out the reaction Endonucleolytic cleavage to 5'-phosphomonoester.. Functionally, endonuclease that specifically degrades the RNA of RNA-DNA hybrids. The protein is Ribonuclease H of Shewanella frigidimarina (strain NCIMB 400).